The following is a 246-amino-acid chain: UDP-N-acetyl-D-mannosaminuronic acid transferase (246 aa).

This sequence belongs to the glycosyltransferase 26 family.

It carries out the reaction UDP-N-acetyl-alpha-D-mannosaminouronate + N-acetyl-alpha-D-glucosaminyl-di-trans,octa-cis-undecaprenyl diphosphate = beta-D-ManNAcA-(1-&gt;4)-alpha-D-GlcNAc-di-trans,octa-cis-undecaprenyl diphosphate + UDP + H(+). Its pathway is bacterial outer membrane biogenesis; enterobacterial common antigen biosynthesis. Functionally, catalyzes the synthesis of Und-PP-GlcNAc-ManNAcA (Lipid II), the second lipid-linked intermediate involved in enterobacterial common antigen (ECA) synthesis. This chain is UDP-N-acetyl-D-mannosaminuronic acid transferase, found in Escherichia coli (strain 55989 / EAEC).